A 233-amino-acid chain; its full sequence is Somatolactin (233 aa).

The signal sequence occupies residues 1–24 (MNMMQVMQSVVWAVLLWPCLVSLG). Cystine bridges form between Cys29/Cys39, Cys89/Cys205, and Cys222/Cys230.

Belongs to the somatotropin/prolactin family. In terms of tissue distribution, pituitary gland.

The protein localises to the secreted. Its function is as follows. May be associated with ion regulation and reproduction. This Oncorhynchus keta (Chum salmon) protein is Somatolactin.